The chain runs to 345 residues: D-erythrose-4-phosphate dehydrogenase (345 aa).

Residue 11–12 (RI) coordinates NAD(+). Substrate is bound by residues 158–160 (SCT), Arg204, 217–218 (TK), and Arg240. Cys159 (nucleophile) is an active-site residue. Asn322 contributes to the NAD(+) binding site.

Belongs to the glyceraldehyde-3-phosphate dehydrogenase family. Epd subfamily. As to quaternary structure, homotetramer.

It is found in the cytoplasm. The catalysed reaction is D-erythrose 4-phosphate + NAD(+) + H2O = 4-phospho-D-erythronate + NADH + 2 H(+). It participates in cofactor biosynthesis; pyridoxine 5'-phosphate biosynthesis; pyridoxine 5'-phosphate from D-erythrose 4-phosphate: step 1/5. In terms of biological role, catalyzes the NAD-dependent conversion of D-erythrose 4-phosphate to 4-phosphoerythronate. This Vibrio campbellii (strain ATCC BAA-1116) protein is D-erythrose-4-phosphate dehydrogenase.